A 333-amino-acid polypeptide reads, in one-letter code: Diaminopimelate epimerase (333 aa).

Positions 24 and 79 each coordinate substrate. Cys-88 functions as the Proton donor in the catalytic mechanism. Substrate is bound by residues Gly-89–Asn-90, Asn-176, Asn-210, and Glu-228–Arg-229. Residue Cys-237 is the Proton acceptor of the active site. Gly-238–Thr-239 contacts substrate.

This sequence belongs to the diaminopimelate epimerase family. In terms of assembly, homodimer.

Its subcellular location is the cytoplasm. The catalysed reaction is (2S,6S)-2,6-diaminopimelate = meso-2,6-diaminopimelate. It functions in the pathway amino-acid biosynthesis; L-lysine biosynthesis via DAP pathway; DL-2,6-diaminopimelate from LL-2,6-diaminopimelate: step 1/1. In terms of biological role, catalyzes the stereoinversion of LL-2,6-diaminopimelate (L,L-DAP) to meso-diaminopimelate (meso-DAP), a precursor of L-lysine and an essential component of the bacterial peptidoglycan. The polypeptide is Diaminopimelate epimerase (Clostridium acetobutylicum (strain ATCC 824 / DSM 792 / JCM 1419 / IAM 19013 / LMG 5710 / NBRC 13948 / NRRL B-527 / VKM B-1787 / 2291 / W)).